Reading from the N-terminus, the 639-residue chain is 1-deoxy-D-xylulose-5-phosphate synthase (639 aa).

Thiamine diphosphate contacts are provided by residues His79 and 120–122; that span reads AHS. Asp151 serves as a coordination point for Mg(2+). Residues 152-153, Asn180, Tyr289, and Glu371 each bind thiamine diphosphate; that span reads GA. Asn180 provides a ligand contact to Mg(2+).

Belongs to the transketolase family. DXPS subfamily. Homodimer. Mg(2+) serves as cofactor. The cofactor is thiamine diphosphate.

It catalyses the reaction D-glyceraldehyde 3-phosphate + pyruvate + H(+) = 1-deoxy-D-xylulose 5-phosphate + CO2. The protein operates within metabolic intermediate biosynthesis; 1-deoxy-D-xylulose 5-phosphate biosynthesis; 1-deoxy-D-xylulose 5-phosphate from D-glyceraldehyde 3-phosphate and pyruvate: step 1/1. Its function is as follows. Catalyzes the acyloin condensation reaction between C atoms 2 and 3 of pyruvate and glyceraldehyde 3-phosphate to yield 1-deoxy-D-xylulose-5-phosphate (DXP). In Allorhizobium ampelinum (strain ATCC BAA-846 / DSM 112012 / S4) (Agrobacterium vitis (strain S4)), this protein is 1-deoxy-D-xylulose-5-phosphate synthase.